Here is a 555-residue protein sequence, read N- to C-terminus: Probable metabolite transport protein YDR387C (555 aa).

The Cytoplasmic portion of the chain corresponds to 1 to 39 (MSTDESEDVYSDLYSIISQVTSNTANDIEQLPYALTFKT). Residues 40-60 (SLIFVGATIGGLLFGYDTGVI) form a helical membrane-spanning segment. Residues 61 to 83 (SGVLLSLKPEDLSLVVLTDVQKE) are Extracellular-facing. Residues 84 to 104 (LITSSTSVGSFFGSILAFPLA) form a helical membrane-spanning segment. Over 105 to 118 (DRYGRRITLAICCS) the chain is Cytoplasmic. The chain crosses the membrane as a helical span at residues 119–139 (IFILAAIGMAIARTLTFLICG). Arg140 is a topological domain (extracellular). A helical membrane pass occupies residues 141 to 161 (LLVGIAVGVSAQCVPLFLSEI). The Cytoplasmic portion of the chain corresponds to 162–168 (SPSRIRG). A helical membrane pass occupies residues 169–189 (FMLTLNIIAITGGQLVSYVIA). Over 190-200 (SLMKEIDNSWR) the chain is Extracellular. A helical transmembrane segment spans residues 201 to 221 (YLFALSAIPAILFLSILDFIP). At 222-356 (ESPRWSISKG…TIRALIVGCM (135 aa)) the chain is on the cytoplasmic side. Positions 289–313 (SSTSGTLSPPNIKRLSSNTERTSNT) are disordered. A helical membrane pass occupies residues 357 to 377 (LMFFQQITGFNAFMYYAAIIF). Residues 378-384 (SKFNIKN) lie on the Extracellular side of the membrane. Residues 385–405 (PLLPPILIASTNFIFTFFAMY) form a helical membrane-spanning segment. Residues 406 to 413 (TMDSLGRR) are Cytoplasmic-facing. The helical transmembrane segment at 414 to 434 (AILLRTILIMTVGLLLCSVGF) threads the bilayer. Topologically, residues 435–440 (GHDQVN) are extracellular. A helical transmembrane segment spans residues 441-461 (LLLISVVIYVAAYASAMGSVP). Residues 462 to 474 (WTCVEFLPLNRRS) lie on the Cytoplasmic side of the membrane. The helical transmembrane segment at 475–497 (FGASCIACTNWLTNAFVSMTYLS) threads the bilayer. Residues 498-506 (TINTIGDEN) are Extracellular-facing. Residues 507–527 (TMLIFAFFTVCAWFFVYFWYP) traverse the membrane as a helical segment. At 528–555 (EVKGLSLEEVGRVFDNGIDVHYVFRTYH) the chain is on the cytoplasmic side.

Belongs to the major facilitator superfamily. Sugar transporter (TC 2.A.1.1) family.

Its subcellular location is the membrane. The sequence is that of Probable metabolite transport protein YDR387C from Saccharomyces cerevisiae (strain ATCC 204508 / S288c) (Baker's yeast).